A 447-amino-acid polypeptide reads, in one-letter code: Cysteine--tRNA ligase (447 aa).

C28 serves as a coordination point for Zn(2+). A 'HIGH' region motif is present at residues 30 to 40 (PTVYNYIHIGN). Residues C211, H236, and E240 each coordinate Zn(2+). Positions 268–272 (KMSKS) match the 'KMSKS' region motif. Residue K271 participates in ATP binding.

Belongs to the class-I aminoacyl-tRNA synthetase family. Monomer. Zn(2+) serves as cofactor.

The protein resides in the cytoplasm. The enzyme catalyses tRNA(Cys) + L-cysteine + ATP = L-cysteinyl-tRNA(Cys) + AMP + diphosphate. The chain is Cysteine--tRNA ligase from Streptococcus pyogenes serotype M3 (strain ATCC BAA-595 / MGAS315).